A 213-amino-acid chain; its full sequence is Pyridoxine/pyridoxamine 5'-phosphate oxidase (213 aa).

FMN-binding positions include 60-65, 75-76, Lys82, and Gln104; these read RMVLMK and YS. Lys65 is a substrate binding site. The substrate site is built by Tyr122 and Arg126. FMN contacts are provided by residues 139-140 and Trp184; that span reads QS. Residue 190–192 participates in substrate binding; sequence RLH. Residue Arg194 participates in FMN binding.

This sequence belongs to the pyridoxamine 5'-phosphate oxidase family. Homodimer. The cofactor is FMN.

The catalysed reaction is pyridoxamine 5'-phosphate + O2 + H2O = pyridoxal 5'-phosphate + H2O2 + NH4(+). It catalyses the reaction pyridoxine 5'-phosphate + O2 = pyridoxal 5'-phosphate + H2O2. It participates in cofactor metabolism; pyridoxal 5'-phosphate salvage; pyridoxal 5'-phosphate from pyridoxamine 5'-phosphate: step 1/1. It functions in the pathway cofactor metabolism; pyridoxal 5'-phosphate salvage; pyridoxal 5'-phosphate from pyridoxine 5'-phosphate: step 1/1. Catalyzes the oxidation of either pyridoxine 5'-phosphate (PNP) or pyridoxamine 5'-phosphate (PMP) into pyridoxal 5'-phosphate (PLP). The protein is Pyridoxine/pyridoxamine 5'-phosphate oxidase of Bradyrhizobium diazoefficiens (strain JCM 10833 / BCRC 13528 / IAM 13628 / NBRC 14792 / USDA 110).